The chain runs to 334 residues: Heat-inducible transcription repressor HrcA (334 aa).

It belongs to the HrcA family.

In terms of biological role, negative regulator of class I heat shock genes (grpE-dnaK-dnaJ and groELS operons). Prevents heat-shock induction of these operons. In Paracidovorax citrulli (strain AAC00-1) (Acidovorax citrulli), this protein is Heat-inducible transcription repressor HrcA.